Here is a 354-residue protein sequence, read N- to C-terminus: Serine/threonine-protein kinase-transforming protein mos (354 aa).

The Protein kinase domain occupies Val74–Arg350. ATP-binding positions include Leu80 to Val88 and Lys101. Asp209 serves as the catalytic Proton acceptor.

This sequence belongs to the protein kinase superfamily. Ser/Thr protein kinase family.

The catalysed reaction is L-seryl-[protein] + ATP = O-phospho-L-seryl-[protein] + ADP + H(+). It catalyses the reaction L-threonyl-[protein] + ATP = O-phospho-L-threonyl-[protein] + ADP + H(+). The protein is Serine/threonine-protein kinase-transforming protein mos (V-MOS) of Moloney murine sarcoma virus (strain ts110) (MoMSV).